The primary structure comprises 608 residues: Isoprene synthase, chloroplastic (608 aa).

The N-terminal 45 residues, 1–45, are a transit peptide targeting the chloroplast; sequence MATNLLCLSNKLSSPTPTPSTRFPQSKNFITQKTSLANPKPWRVI. A dimethylallyl diphosphate-binding site is contributed by Asp-350. Mg(2+) contacts are provided by Asp-350 and Asp-354. A DDXXD motif motif is present at residues 350-354; that stretch reads DDVYD. Residues Glu-428, Arg-494, and Asn-497 each contribute to the dimethylallyl diphosphate site. The Mg(2+) site is built by Asn-497, Thr-501, and Glu-505.

The protein belongs to the terpene synthase family. Tpsb subfamily. It depends on Mg(2+) as a cofactor. Mn(2+) is required as a cofactor.

The protein resides in the plastid. It is found in the chloroplast. It carries out the reaction dimethylallyl diphosphate = isoprene + diphosphate. In terms of biological role, lyase that catalyzes the formation of isoprene from dimethylallyl diphosphate. The polypeptide is Isoprene synthase, chloroplastic (ISPS) (Pueraria montana var. lobata (Kudzu vine)).